The chain runs to 309 residues: Ribose-phosphate pyrophosphokinase (309 aa).

ATP-binding positions include 37 to 39 and 96 to 97; these read DGE and RQ. The Mg(2+) site is built by histidine 130 and aspartate 169. Lysine 192 is an active-site residue. D-ribose 5-phosphate is bound by residues arginine 194, aspartate 218, and 222 to 226; that span reads DTAGT.

This sequence belongs to the ribose-phosphate pyrophosphokinase family. Class I subfamily. In terms of assembly, homohexamer. Requires Mg(2+) as cofactor.

The protein resides in the cytoplasm. It carries out the reaction D-ribose 5-phosphate + ATP = 5-phospho-alpha-D-ribose 1-diphosphate + AMP + H(+). It participates in metabolic intermediate biosynthesis; 5-phospho-alpha-D-ribose 1-diphosphate biosynthesis; 5-phospho-alpha-D-ribose 1-diphosphate from D-ribose 5-phosphate (route I): step 1/1. Functionally, involved in the biosynthesis of the central metabolite phospho-alpha-D-ribosyl-1-pyrophosphate (PRPP) via the transfer of pyrophosphoryl group from ATP to 1-hydroxyl of ribose-5-phosphate (Rib-5-P). The protein is Ribose-phosphate pyrophosphokinase of Wolinella succinogenes (strain ATCC 29543 / DSM 1740 / CCUG 13145 / JCM 31913 / LMG 7466 / NCTC 11488 / FDC 602W) (Vibrio succinogenes).